The following is a 242-amino-acid chain: Phosphate import ATP-binding protein PstB 1 (242 aa).

The 237-residue stretch at 1–237 (MDLYYGSYRA…PKDQRTEDYI (237 aa)) folds into the ABC transporter domain. 28–35 (GPSGCGKS) lines the ATP pocket.

Belongs to the ABC transporter superfamily. Phosphate importer (TC 3.A.1.7) family. The complex is composed of two ATP-binding proteins (PstB), two transmembrane proteins (PstC and PstA) and a solute-binding protein (PstS).

The protein resides in the cell membrane. The enzyme catalyses phosphate(out) + ATP + H2O = ADP + 2 phosphate(in) + H(+). Functionally, part of the ABC transporter complex PstSACB involved in phosphate import. Responsible for energy coupling to the transport system. This Symbiobacterium thermophilum (strain DSM 24528 / JCM 14929 / IAM 14863 / T) protein is Phosphate import ATP-binding protein PstB 1.